A 616-amino-acid chain; its full sequence is Dihydroxy-acid dehydratase (616 aa).

Asp81 contributes to the Mg(2+) binding site. Cys122 is a [2Fe-2S] cluster binding site. The Mg(2+) site is built by Asp123 and Lys124. Lys124 is subject to N6-carboxylysine. Cys195 serves as a coordination point for [2Fe-2S] cluster. Glu491 is a Mg(2+) binding site. Residue Ser517 is the Proton acceptor of the active site.

It belongs to the IlvD/Edd family. As to quaternary structure, homodimer. [2Fe-2S] cluster serves as cofactor. It depends on Mg(2+) as a cofactor.

It catalyses the reaction (2R)-2,3-dihydroxy-3-methylbutanoate = 3-methyl-2-oxobutanoate + H2O. It carries out the reaction (2R,3R)-2,3-dihydroxy-3-methylpentanoate = (S)-3-methyl-2-oxopentanoate + H2O. The protein operates within amino-acid biosynthesis; L-isoleucine biosynthesis; L-isoleucine from 2-oxobutanoate: step 3/4. It functions in the pathway amino-acid biosynthesis; L-valine biosynthesis; L-valine from pyruvate: step 3/4. Functions in the biosynthesis of branched-chain amino acids. Catalyzes the dehydration of (2R,3R)-2,3-dihydroxy-3-methylpentanoate (2,3-dihydroxy-3-methylvalerate) into 2-oxo-3-methylpentanoate (2-oxo-3-methylvalerate) and of (2R)-2,3-dihydroxy-3-methylbutanoate (2,3-dihydroxyisovalerate) into 2-oxo-3-methylbutanoate (2-oxoisovalerate), the penultimate precursor to L-isoleucine and L-valine, respectively. In Shewanella sediminis (strain HAW-EB3), this protein is Dihydroxy-acid dehydratase.